A 90-amino-acid polypeptide reads, in one-letter code: Progonadoliberin-3 (90 aa).

The N-terminal stretch at 1-23 (MDVSSKVVVQVLLLALVVQVTLC) is a signal peptide. Q24 carries the post-translational modification Pyrrolidone carboxylic acid. G33 carries the post-translational modification Glycine amide.

Belongs to the GnRH family. As to expression, expressed in neuron cell bodies of the nucleus olfactoretinalis.

The protein resides in the secreted. Its function is as follows. Stimulates the secretion of gonadotropins. This chain is Progonadoliberin-3 (gnrh3), found in Oryzias latipes (Japanese rice fish).